Here is a 351-residue protein sequence, read N- to C-terminus: Phosphoribosylformylglycinamidine cyclo-ligase (351 aa).

This sequence belongs to the AIR synthase family.

The protein localises to the cytoplasm. The enzyme catalyses 2-formamido-N(1)-(5-O-phospho-beta-D-ribosyl)acetamidine + ATP = 5-amino-1-(5-phospho-beta-D-ribosyl)imidazole + ADP + phosphate + H(+). The protein operates within purine metabolism; IMP biosynthesis via de novo pathway; 5-amino-1-(5-phospho-D-ribosyl)imidazole from N(2)-formyl-N(1)-(5-phospho-D-ribosyl)glycinamide: step 2/2. This Burkholderia ambifaria (strain MC40-6) protein is Phosphoribosylformylglycinamidine cyclo-ligase.